Here is a 610-residue protein sequence, read N- to C-terminus: Elongation factor 4 (610 aa).

The tr-type G domain maps to 7–189; sequence SRIRNFSIIA…AIVQRIPPPK (183 aa). Residues 19 to 24 and 136 to 139 each bind GTP; these read DHGKST and NKID.

The protein belongs to the TRAFAC class translation factor GTPase superfamily. Classic translation factor GTPase family. LepA subfamily.

The protein resides in the cell inner membrane. It catalyses the reaction GTP + H2O = GDP + phosphate + H(+). Functionally, required for accurate and efficient protein synthesis under certain stress conditions. May act as a fidelity factor of the translation reaction, by catalyzing a one-codon backward translocation of tRNAs on improperly translocated ribosomes. Back-translocation proceeds from a post-translocation (POST) complex to a pre-translocation (PRE) complex, thus giving elongation factor G a second chance to translocate the tRNAs correctly. Binds to ribosomes in a GTP-dependent manner. In Thermus thermophilus (strain ATCC 27634 / DSM 579 / HB8), this protein is Elongation factor 4.